A 337-amino-acid polypeptide reads, in one-letter code: Deoxyhypusine hydroxylase (337 aa).

HEAT-like PBS-type repeat units lie at residues 73–99 (LKHE…VLSD) and 106–132 (CRHE…YRDR). Positions 75, 76, 108, and 109 each coordinate Fe cation. Residues 156-165 (AERQKEKLRP) show a composition bias toward basic and acidic residues. The segment at 156-183 (AERQKEKLRPSDFASIDPAPPMPESDKE) is disordered. 3 HEAT-like PBS-type repeats span residues 202 to 235 (SRYR…GLSD), 240 to 266 (FRHE…ALSN), and 273 to 300 (VRHE…FLHD). Histidine 242, glutamate 243, histidine 275, and glutamate 276 together coordinate Fe cation.

Belongs to the deoxyhypusine hydroxylase family. It depends on Fe(2+) as a cofactor.

Its subcellular location is the cytoplasm. The protein resides in the nucleus. It carries out the reaction [eIF5A protein]-deoxyhypusine + AH2 + O2 = [eIF5A protein]-hypusine + A + H2O. It participates in protein modification; eIF5A hypusination. Its function is as follows. Catalyzes the hydroxylation of the N(6)-(4-aminobutyl)-L-lysine intermediate to form hypusine, an essential post-translational modification only found in mature eIF-5A factor. The protein is Deoxyhypusine hydroxylase of Gibberella zeae (strain ATCC MYA-4620 / CBS 123657 / FGSC 9075 / NRRL 31084 / PH-1) (Wheat head blight fungus).